Here is a 310-residue protein sequence, read N- to C-terminus: Phosphoribosylaminoimidazole-succinocarboxamide synthase (310 aa).

Belongs to the SAICAR synthetase family.

It carries out the reaction 5-amino-1-(5-phospho-D-ribosyl)imidazole-4-carboxylate + L-aspartate + ATP = (2S)-2-[5-amino-1-(5-phospho-beta-D-ribosyl)imidazole-4-carboxamido]succinate + ADP + phosphate + 2 H(+). It participates in purine metabolism; IMP biosynthesis via de novo pathway; 5-amino-1-(5-phospho-D-ribosyl)imidazole-4-carboxamide from 5-amino-1-(5-phospho-D-ribosyl)imidazole-4-carboxylate: step 1/2. This Xanthomonas axonopodis pv. citri (strain 306) protein is Phosphoribosylaminoimidazole-succinocarboxamide synthase.